The sequence spans 457 residues: MYQPFQHLDSDQVASWQSPEMLMNKSVSRESQRRKELVAGQIVTGSLLLLLIFWTLFGNILVCTAVMRFRHLRSRVTNIFIVSLAVSDLLVALLVMPWKAVAEVAGHWPFGAFCDIWVAFDIMCSTASILNLCVISVDRYWAISSPFRYERKMTQRVALLMISTAWALSVLISFIPVQLSWHKSETEDHLLSNHSTGNCDSSLNRTYAISSSLISFYIPVAIMIVTYTRIYRIAQIQIKRISTLERAAEHAQSCRSNRVDSCSRHHQTSLRTSIKKETKVLKTLSIIMGVFVCCWLPFFILNCMVPFCDRSPGHPQAGLPCVSETTFDIFVWFGWANSSLNPIIYAFNADFRKVFSSLLGCGHWCSTTPVETVNISNELISYNQDTLFHKDIVTAYVNMIPNVVDCIDDNEDAFDHMSQISQTSANNELATDSMCELDSEVDISLHKITPSMSNGIH.

Residues 1–41 (MYQPFQHLDSDQVASWQSPEMLMNKSVSRESQRRKELVAGQ) lie on the Extracellular side of the membrane. A glycan (N-linked (GlcNAc...) asparagine) is linked at asparagine 24. Residues 42–67 (IVTGSLLLLLIFWTLFGNILVCTAVM) traverse the membrane as a helical segment. At 68–78 (RFRHLRSRVTN) the chain is on the cytoplasmic side. A helical transmembrane segment spans residues 79 to 105 (IFIVSLAVSDLLVALLVMPWKAVAEVA). At 106 to 114 (GHWPFGAFC) the chain is on the extracellular side. A disulfide bond links cysteine 114 and cysteine 199. A helical transmembrane segment spans residues 115–137 (DIWVAFDIMCSTASILNLCVISV). At 138–156 (DRYWAISSPFRYERKMTQR) the chain is on the cytoplasmic side. The chain crosses the membrane as a helical span at residues 157 to 181 (VALLMISTAWALSVLISFIPVQLSW). At 182 to 205 (HKSETEDHLLSNHSTGNCDSSLNR) the chain is on the extracellular side. A helical membrane pass occupies residues 206–231 (TYAISSSLISFYIPVAIMIVTYTRIY). At 232 to 282 (RIAQIQIKRISTLERAAEHAQSCRSNRVDSCSRHHQTSLRTSIKKETKVLK) the chain is on the cytoplasmic side. A helical transmembrane segment spans residues 283 to 309 (TLSIIMGVFVCCWLPFFILNCMVPFCD). Topologically, residues 310–326 (RSPGHPQAGLPCVSETT) are extracellular. The chain crosses the membrane as a helical span at residues 327–351 (FDIFVWFGWANSSLNPIIYAFNADF). The Cytoplasmic segment spans residues 352 to 457 (RKVFSSLLGC…ITPSMSNGIH (106 aa)). Cysteine 361 carries S-palmitoyl cysteine lipidation.

Belongs to the G-protein coupled receptor 1 family. As to expression, brain and kidney.

The protein resides in the cell membrane. Dopamine receptor whose activity is mediated by G proteins which activate adenylyl cyclase. This is D(1B) dopamine receptor (drd5) from Xenopus laevis (African clawed frog).